Here is a 195-residue protein sequence, read N- to C-terminus: Imidazoleglycerol-phosphate dehydratase (195 aa).

The protein belongs to the imidazoleglycerol-phosphate dehydratase family.

Its subcellular location is the cytoplasm. It catalyses the reaction D-erythro-1-(imidazol-4-yl)glycerol 3-phosphate = 3-(imidazol-4-yl)-2-oxopropyl phosphate + H2O. Its pathway is amino-acid biosynthesis; L-histidine biosynthesis; L-histidine from 5-phospho-alpha-D-ribose 1-diphosphate: step 6/9. The chain is Imidazoleglycerol-phosphate dehydratase from Burkholderia thailandensis (strain ATCC 700388 / DSM 13276 / CCUG 48851 / CIP 106301 / E264).